A 171-amino-acid chain; its full sequence is Neudesin (171 aa).

Positions methionine 1–alanine 30 are cleaved as a signal peptide. The region spanning valine 43–phenylalanine 128 is the Cytochrome b5 heme-binding domain. An N6-acetyllysine modification is found at lysine 135.

It belongs to the cytochrome b5 family. MAPR subfamily. Interacts with PINK1 and PARK7. In terms of tissue distribution, in the embryo, expressed most abundantly in brain and spinal cord. Widely expressed in adult tissues including brain, heart, lung and kidney. In brain, expressed in neurons but not in glial cells. In the hypothalamus is expressed primarily in the paraventricular nucleus (PVN), with lower levels of expression in the arcuate nucleus (ARC).

Its subcellular location is the secreted. The protein localises to the extracellular space. It localises to the mitochondrion. The protein resides in the endoplasmic reticulum. Acts as a neurotrophic factor in postnatal mature neurons, enhancing neuronal survival. Promotes cell proliferation and neurogenesis in undifferentiated neural pro-genitor cells at the embryonic stage and inhibits differentiation of astrocytes. Its neurotrophic activity is exerted via MAPK1/ERK2, MAPK3/ERK1 and AKT1/AKT pathways. Neurotrophic activity is enhanced by binding to heme. Also acts as an anorexigenic neurotrophic factor that contributes to energy balance. This is Neudesin from Mus musculus (Mouse).